The following is a 249-amino-acid chain: MSELTVVKFGGSLTENPQAQNKFLEELTLISKRQNIILVHGGGPEINALLEKFAITSRFVNGLRFTDADTLGVVELALSGKVNRVLTTGLIKNGANAVGISGKDGKSVICRQVEYLGFVGEPVKVNRKLIDILIKSRFLPVIASIAADVEGNIMNVNADTLAASIAVAFKAQKLIFLTDVAGVFDKNNNIIKEIKIKEINSLIEDKTITGGMIPKIKGCAESVKKGLKEVWIAEGISGIQKIKGTVIKK.

Substrate-binding positions include Gly42–Gly43, Arg64, and Asn155.

Belongs to the acetylglutamate kinase family. ArgB subfamily.

Its subcellular location is the cytoplasm. The enzyme catalyses N-acetyl-L-glutamate + ATP = N-acetyl-L-glutamyl 5-phosphate + ADP. It participates in amino-acid biosynthesis; L-arginine biosynthesis; N(2)-acetyl-L-ornithine from L-glutamate: step 2/4. In terms of biological role, catalyzes the ATP-dependent phosphorylation of N-acetyl-L-glutamate. This is Acetylglutamate kinase from Endomicrobium trichonymphae.